Here is a 122-residue protein sequence, read N- to C-terminus: UPF0102 protein CLL_A1253 (122 aa).

Belongs to the UPF0102 family.

The sequence is that of UPF0102 protein CLL_A1253 from Clostridium botulinum (strain Eklund 17B / Type B).